The following is a 354-amino-acid chain: Uroporphyrinogen decarboxylase (354 aa).

Residues 27–31 (RQAGR), aspartate 77, tyrosine 153, threonine 208, and histidine 326 each bind substrate.

It belongs to the uroporphyrinogen decarboxylase family. As to quaternary structure, homodimer.

Its subcellular location is the cytoplasm. The enzyme catalyses uroporphyrinogen III + 4 H(+) = coproporphyrinogen III + 4 CO2. Its pathway is porphyrin-containing compound metabolism; protoporphyrin-IX biosynthesis; coproporphyrinogen-III from 5-aminolevulinate: step 4/4. In terms of biological role, catalyzes the decarboxylation of four acetate groups of uroporphyrinogen-III to yield coproporphyrinogen-III. The protein is Uroporphyrinogen decarboxylase of Neisseria meningitidis serogroup C / serotype 2a (strain ATCC 700532 / DSM 15464 / FAM18).